We begin with the raw amino-acid sequence, 445 residues long: Phosphoglucosamine mutase 1 (445 aa).

The active-site Phosphoserine intermediate is serine 102. Mg(2+) contacts are provided by serine 102, aspartate 241, aspartate 243, and aspartate 245. Position 102 is a phosphoserine (serine 102).

Belongs to the phosphohexose mutase family. The cofactor is Mg(2+). Activated by phosphorylation.

It carries out the reaction alpha-D-glucosamine 1-phosphate = D-glucosamine 6-phosphate. Its function is as follows. Catalyzes the conversion of glucosamine-6-phosphate to glucosamine-1-phosphate. The chain is Phosphoglucosamine mutase 1 from Shewanella amazonensis (strain ATCC BAA-1098 / SB2B).